The sequence spans 114 residues: Large ribosomal subunit protein bL19 (114 aa).

Belongs to the bacterial ribosomal protein bL19 family.

Functionally, this protein is located at the 30S-50S ribosomal subunit interface and may play a role in the structure and function of the aminoacyl-tRNA binding site. The chain is Large ribosomal subunit protein bL19 from Lactococcus lactis subsp. cremoris (strain MG1363).